The chain runs to 80 residues: Cell division activator CedA (80 aa).

Belongs to the CedA family.

Functionally, activates the cell division inhibited by chromosomal DNA over-replication. The polypeptide is Cell division activator CedA (Salmonella typhimurium (strain LT2 / SGSC1412 / ATCC 700720)).